A 377-amino-acid chain; its full sequence is LIM/homeobox protein Lhx9 (377 aa).

2 consecutive LIM zinc-binding domains span residues 50–111 and 112–174; these read ALCA…RFSV and QRCA…LVQG. Disordered regions lie at residues 228–249, 309–346, and 358–377; these read NEND…QKTK, RQEN…TDLT, and SSLD…TNLF. The homeobox DNA-binding region spans 248-307; the sequence is TKXMRTSFKHHQLRTMKSYFAINHNPDAKDLKQLAQKTGLTKRVLQVWFQNARAKFRRNV. Residues 333-346 show a composition bias toward low complexity; the sequence is LTPPSTATTLTDLT. Residues 365 to 377 are compositionally biased toward polar residues; that stretch reads SGSPPQTTLTNLF.

Its subcellular location is the nucleus. Its function is as follows. May be involved in gonadal development. The polypeptide is LIM/homeobox protein Lhx9 (lhx9) (Psalidodon fasciatus (Banded astyanax)).